Reading from the N-terminus, the 291-residue chain is 4-hydroxy-tetrahydrodipicolinate synthase (291 aa).

Residue Thr-45 participates in pyruvate binding. Tyr-131 functions as the Proton donor/acceptor in the catalytic mechanism. The active-site Schiff-base intermediate with substrate is Lys-159. Ile-202 lines the pyruvate pocket.

This sequence belongs to the DapA family. Homotetramer; dimer of dimers.

It localises to the cytoplasm. The enzyme catalyses L-aspartate 4-semialdehyde + pyruvate = (2S,4S)-4-hydroxy-2,3,4,5-tetrahydrodipicolinate + H2O + H(+). It functions in the pathway amino-acid biosynthesis; L-lysine biosynthesis via DAP pathway; (S)-tetrahydrodipicolinate from L-aspartate: step 3/4. Functionally, catalyzes the condensation of (S)-aspartate-beta-semialdehyde [(S)-ASA] and pyruvate to 4-hydroxy-tetrahydrodipicolinate (HTPA). This Methanosarcina barkeri (strain Fusaro / DSM 804) protein is 4-hydroxy-tetrahydrodipicolinate synthase.